We begin with the raw amino-acid sequence, 426 residues long: Enolase (426 aa).

Residue Gln163 coordinates (2R)-2-phosphoglycerate. The active-site Proton donor is Glu205. Residues Asp242, Glu283, and Asp310 each contribute to the Mg(2+) site. (2R)-2-phosphoglycerate contacts are provided by Lys335, Arg364, Ser365, and Lys386. Lys335 functions as the Proton acceptor in the catalytic mechanism.

The protein belongs to the enolase family. Mg(2+) serves as cofactor.

The protein resides in the cytoplasm. Its subcellular location is the secreted. It is found in the cell surface. The catalysed reaction is (2R)-2-phosphoglycerate = phosphoenolpyruvate + H2O. It functions in the pathway carbohydrate degradation; glycolysis; pyruvate from D-glyceraldehyde 3-phosphate: step 4/5. Catalyzes the reversible conversion of 2-phosphoglycerate (2-PG) into phosphoenolpyruvate (PEP). It is essential for the degradation of carbohydrates via glycolysis. The sequence is that of Enolase from Beutenbergia cavernae (strain ATCC BAA-8 / DSM 12333 / CCUG 43141 / JCM 11478 / NBRC 16432 / NCIMB 13614 / HKI 0122).